The primary structure comprises 50 residues: Putative protein HokG (50 aa).

Residues 5-25 (YALVAIIVLCCTVLGFTLMVG) form a helical membrane-spanning segment.

Belongs to the Hok/Gef family.

The protein resides in the cell inner membrane. Functionally, toxic component of a type I toxin-antitoxin (TA) system. When overexpressed kills cells within minutes; causes collapse of the transmembrane potential and arrest of respiration. Its toxic effect is probably neutralized by an antisense antitoxin Sok RNA. The chain is Putative protein HokG (hokG) from Escherichia coli O157:H7.